The chain runs to 1896 residues: von Willebrand factor A domain-containing protein 8 (1896 aa).

Residues 1–18 (MHSRILFKGTAAAVAARR) constitute a mitochondrion transit peptide. 439–446 (GAKGCGKS) serves as a coordination point for ATP. The disordered stretch occupies residues 1536 to 1564 (GLDVSSPKHGKIDAKNAPHVGGNQWAGGT). The VWFA domain occupies 1705 to 1887 (RLRVLADVSG…KEIPQILQQI (183 aa)).

In terms of assembly, monomer.

It localises to the mitochondrion. Functionally, exhibits ATPase activity in vitro. The chain is von Willebrand factor A domain-containing protein 8 (vwa8) from Danio rerio (Zebrafish).